A 363-amino-acid polypeptide reads, in one-letter code: MFCRSPFLGISSWSLASAALCPSSCSFPAGRDLRCDAAVPEVKWTAFVRTLVARPLSADDVRDFVSTFAHCRLALSWPVGAELRFATSDMLGITQAELAKLSRGYGCCPGMDLTVIGVTIFAEVSALVLVGECGEIYAFNGVFDDALYRLAEDAFGLWKHGLRRFEPVYGSKCLMETGASFFGGMSGVDDALAFAVSFDKALVPLPWPRGAFFEFAVPRRAEKRWRLIPGGGVAVVIGRFFGRGVTLPLLRRQRVLMDQVGRVYAASLDGGAVVRLSDSFRAFLAMGVRKLFKNHRFPPGHLWTMQLPVTCVHAPVINLPAVYQLSPHMVEREMSAVSCGASTVVRRDCEDTLRDGDAGVDTS.

An N-terminal signal peptide occupies residues 1 to 18; that stretch reads MFCRSPFLGISSWSLASA.

This chain is Protein U2 (U2), found in Homo sapiens (Human).